Here is a 206-residue protein sequence, read N- to C-terminus: MAPSHLSVREMREDEKPLVLEMLKAGVKDTENRVALHALTRPPALLLLAAASSGLRFVLASFALALLLPVFLAVAAVKLGLRARWGSLPPPGGLGGPWVAVRGSGDVCGVLALAPGTNAGDGARVTRLSVSRWHRRRGVGRRLLAFAEARARAWAGGMGEPRARLVVPVAVAAWGVGGMLEGCGYQAEGGWGCLGYTLVREFSKDL.

The 201-residue stretch at 6-206 (LSVREMREDE…TLVREFSKDL (201 aa)) folds into the N-acetyltransferase domain. Residues 57-77 (FVLASFALALLLPVFLAVAAV) traverse the membrane as a helical segment.

This sequence belongs to the camello family. As to expression, expressed in K-562 and HeLa cell lines and in brain.

It is found in the membrane. Its function is as follows. Probable acetyltransferase. In terms of biological role, may act as a transcription factor that regulates the expression of coproporphyrinogen oxidase by binding to a promoter regulatory element. The polypeptide is Probable N-acetyltransferase 14 (NAT14) (Homo sapiens (Human)).